The primary structure comprises 88 residues: Small ribosomal subunit protein bS20 (88 aa).

Belongs to the bacterial ribosomal protein bS20 family.

Binds directly to 16S ribosomal RNA. The protein is Small ribosomal subunit protein bS20 of Rhodopseudomonas palustris (strain BisA53).